The sequence spans 175 residues: NADH-quinone oxidoreductase subunit B (175 aa).

Positions 54, 55, 119, and 149 each coordinate [4Fe-4S] cluster.

It belongs to the complex I 20 kDa subunit family. As to quaternary structure, NDH-1 is composed of at least 14 different subunits, Nqo1 to Nqo14. The complex has a L-shaped structure, with the hydrophobic arm (subunits Nqo7, Nqo8, Nqo10 to Nqo14) embedded in the inner membrane and the hydrophilic peripheral arm (subunits Nqo1 to Nqo6, Nqo9) protruding into the bacterial cytoplasm. The hydrophilic domain contains all the redox centers. NADH-quinone oxidoreductase forms a supercomplex with ubiquinol-cytochrome c reductase complex (complex III or cytochrome b-c1 complex) and cytochrome c oxidase (complex IV), which stabilizes the NADH-quinone oxidoreductase complex. The cofactor is [4Fe-4S] cluster.

It is found in the cell inner membrane. It catalyses the reaction a quinone + NADH + 5 H(+)(in) = a quinol + NAD(+) + 4 H(+)(out). Its function is as follows. NDH-1 shuttles electrons from NADH, via FMN and iron-sulfur (Fe-S) centers, to quinones in the respiratory chain. The immediate electron acceptor for the enzyme in this species is believed to be ubiquinone. Couples the redox reaction to proton translocation (for every two electrons transferred, four hydrogen ions are translocated across the cytoplasmic membrane), and thus conserves the redox energy in a proton gradient. In Paracoccus denitrificans (strain Pd 1222), this protein is NADH-quinone oxidoreductase subunit B.